Consider the following 154-residue polypeptide: Urease accessory protein UreE (154 aa).

Residues 134-154 are disordered; sequence PESGAYGKSGHNHGHSHSHED. Residues 143-154 show a composition bias toward basic residues; the sequence is GHNHGHSHSHED.

It belongs to the UreE family.

It is found in the cytoplasm. Functionally, involved in urease metallocenter assembly. Binds nickel. Probably functions as a nickel donor during metallocenter assembly. The sequence is that of Urease accessory protein UreE from Alteromonas mediterranea (strain DSM 17117 / CIP 110805 / LMG 28347 / Deep ecotype).